A 1346-amino-acid chain; its full sequence is Adhesion G protein-coupled receptor A3 (1346 aa).

Residues 1–21 form the signal peptide; sequence MSVLCVLLLAFVLPLRGSSSA. Residues 18-45 are disordered; sequence SSSAGSTECKTYDERSRSAGKSSPSGAT. The Extracellular portion of the chain corresponds to 22-739; that stretch reads GSTECKTYDE…NVFIFRPLHP (718 aa). LRR repeat units lie at residues 66 to 90, 91 to 114, 116 to 138, and 139 to 162; these read FPNRTVSLILSNNKIQELLNGSFVG, LSSLERLDIKNNIITHIEPGAFYG, FSLKRLDLSKNLIGCLHVDVFKG, and LTNLVKLNLSENKFSSLSQGIFDS. In terms of domain architecture, LRRCT spans 176–223; the sequence is LLCDCNLQWLVVWIKEKAIGVKETRCSFPRSLQGQLITTLRAETLTCD. The 99-residue stretch at 229-327 folds into the Ig-like domain; it reads PSFQMTPSQH…GNNTRTVHIV (99 aa). A disulfide bridge links Cys-251 with Cys-311. 3 LRR repeats span residues 503-529, 574-600, and 611-632; these read LQRIALLRVSNGALAYSTNSPNIALEA, TSNLSALALKNTIVEASLQLPPTLFSS, and VYKLHLLAFRNGKLFPPTGNSS. A GAIN-B domain is found at 563 to 728; the sequence is PERQLSFKCN…AVLMDLNRTG (166 aa). Residues 679 to 728 are GPS; the sequence is PAFWNFSLQGGQGGWQSDGCRILHQDDNFTTVSCHSLNSYAVLMDLNRTG. Cys-698 and Cys-712 form a disulfide bridge. A helical membrane pass occupies residues 740-760; that stretch reads VIYSTALVLVLCLLSVIVSYI. Over 761–773 the chain is Cytoplasmic; sequence YHHKSVRISKKCW. The helical transmembrane segment at 774–794 threads the bilayer; sequence HMLVNLCLHILLTCAVFVGGI. Residues 795–804 are Extracellular-facing; the sequence is NQTYNASVCQ. A helical membrane pass occupies residues 805 to 825; the sequence is AMGIVLHYSTLATALWSGVTA. Over 826–854 the chain is Cytoplasmic; it reads RNIYKQVTRKAKRYEELDEPPPPPRPMLR. Residues 855 to 875 form a helical membrane-spanning segment; sequence FYLIGGGIPIIVCGITAAANI. Over 876-897 the chain is Extracellular; the sequence is KNYGSQVNAPYCWMAWEPSLGA. A helical membrane pass occupies residues 898–918; sequence FYGPAAFIVFVDCMYFLSILI. Residues 919–977 lie on the Cytoplasmic side of the membrane; that stretch reads QLRRHPERRFELKEQSEEQQHLSVTEATEITPVHLESSPTAQPVPMSALENEHTFVSQL. A helical transmembrane segment spans residues 978-998; the sequence is MGVAGSLTLYAALWVFGALAI. At 999–1005 the chain is on the extracellular side; that stretch reads SQEHPAD. The helical transmembrane segment at 1006–1026 threads the bilayer; that stretch reads LVFACLFGALALGLGAFLVAH. Over 1027-1346 the chain is Cytoplasmic; it reads HCVNRQDMRR…TGLWKHETTV (320 aa). Over residues 1157–1169 the composition is skewed to polar residues; sequence SVNNNNLPGNANI. Disordered stretches follow at residues 1157-1188 and 1202-1284; these read SVNNNNLPGNANITGHPGRHHKNRSRAHRASR and SVEG…DGSE. Composition is skewed to basic residues over residues 1173-1187 and 1212-1226; these read PGRHHKNRSRAHRAS and NKRHHHESLHARNSR. Positions 1238 to 1252 are enriched in low complexity; that stretch reads QSQLQQDSSDAASTS. Residues 1266-1280 are compositionally biased toward gly residues; sequence IGNGFGHGISNGGLL. The short motif at 1344–1346 is the PDZ-binding element; sequence TTV.

It belongs to the G-protein coupled receptor 2 family. Adhesion G-protein coupled receptor (ADGR) subfamily. As to quaternary structure, interacts (via PDZ-binding motif) with disheveled proteins; leading to the localization of dishevelled proteins to specific membrane subdomains. As to expression, ubiquitously expressed at very low levels.

It is found in the cell membrane. Orphan receptor that acts as a critical modulator of planar cell polarity during gastrulation. Controls the localization of dishevelled. This is Adhesion G protein-coupled receptor A3 (adgra3) from Danio rerio (Zebrafish).